The primary structure comprises 52 residues: DNA-directed RNA polymerase subunit Rpo12 (52 aa).

Zn(2+) is bound by residues Cys-13, Cys-30, and Cys-33.

This sequence belongs to the archaeal Rpo12/eukaryotic RPC10 RNA polymerase subunit family. Part of the RNA polymerase complex. It depends on Zn(2+) as a cofactor.

It is found in the cytoplasm. It carries out the reaction RNA(n) + a ribonucleoside 5'-triphosphate = RNA(n+1) + diphosphate. In terms of biological role, DNA-dependent RNA polymerase (RNAP) catalyzes the transcription of DNA into RNA using the four ribonucleoside triphosphates as substrates. The sequence is that of DNA-directed RNA polymerase subunit Rpo12 from Pyrobaculum arsenaticum (strain DSM 13514 / JCM 11321 / PZ6).